We begin with the raw amino-acid sequence, 269 residues long: MPELPEVETSRRGIEPWVAGQTILRAEVRNARLRWPVDEEIIALRDQRVLSVQRRAKYLLLELEKGWIIIHLGMSGRLRVLPQPQPPEKHDHVDLVIGNGCIIRYTDPRRFGAWLWSDDLRTSRALAHLGPEPLSDKFDGRWLYQKSHNKRTSIKPWLMDNTLVVGVGNIYASESLFVAGILPGRAAGSLSEEEAGLLAESIKAVLLRSIEQGGTTLRDFLQSDGKPGYFVQELQVYGRGGEPCRVCGTPIQMAKHGQRSTFFCPACQH.

The active-site Schiff-base intermediate with DNA is proline 2. Catalysis depends on glutamate 3, which acts as the Proton donor. The Proton donor; for beta-elimination activity role is filled by lysine 57. Histidine 90, arginine 109, and lysine 150 together coordinate DNA. An FPG-type zinc finger spans residues 235–269 (QVYGRGGEPCRVCGTPIQMAKHGQRSTFFCPACQH). Arginine 259 functions as the Proton donor; for delta-elimination activity in the catalytic mechanism.

Belongs to the FPG family. As to quaternary structure, monomer. Zn(2+) is required as a cofactor.

The enzyme catalyses Hydrolysis of DNA containing ring-opened 7-methylguanine residues, releasing 2,6-diamino-4-hydroxy-5-(N-methyl)formamidopyrimidine.. It catalyses the reaction 2'-deoxyribonucleotide-(2'-deoxyribose 5'-phosphate)-2'-deoxyribonucleotide-DNA = a 3'-end 2'-deoxyribonucleotide-(2,3-dehydro-2,3-deoxyribose 5'-phosphate)-DNA + a 5'-end 5'-phospho-2'-deoxyribonucleoside-DNA + H(+). Its function is as follows. Involved in base excision repair of DNA damaged by oxidation or by mutagenic agents. Acts as a DNA glycosylase that recognizes and removes damaged bases. Has a preference for oxidized purines, such as 7,8-dihydro-8-oxoguanine (8-oxoG). Has AP (apurinic/apyrimidinic) lyase activity and introduces nicks in the DNA strand. Cleaves the DNA backbone by beta-delta elimination to generate a single-strand break at the site of the removed base with both 3'- and 5'-phosphates. This chain is Formamidopyrimidine-DNA glycosylase, found in Sodalis glossinidius (strain morsitans).